A 127-amino-acid polypeptide reads, in one-letter code: UPF0102 protein Reut_A3265 (127 aa).

The protein belongs to the UPF0102 family.

The polypeptide is UPF0102 protein Reut_A3265 (Cupriavidus pinatubonensis (strain JMP 134 / LMG 1197) (Cupriavidus necator (strain JMP 134))).